A 215-amino-acid chain; its full sequence is Pyrrolidone-carboxylate peptidase (215 aa).

Catalysis depends on residues Glu-80, Cys-143, and His-167.

The protein belongs to the peptidase C15 family. In terms of assembly, homotetramer.

It is found in the cytoplasm. The enzyme catalyses Release of an N-terminal pyroglutamyl group from a polypeptide, the second amino acid generally not being Pro.. Removes 5-oxoproline from various penultimate amino acid residues except L-proline. This Bacillus cereus (strain ATCC 10987 / NRS 248) protein is Pyrrolidone-carboxylate peptidase.